The primary structure comprises 1161 residues: Hamartin (1161 aa).

Lysine 30 participates in a covalent cross-link: Glycyl lysine isopeptide (Lys-Gly) (interchain with G-Cter in ubiquitin). Disordered regions lie at residues 296-336 (PYVD…PSTR) and 353-591 (CGMT…QRGV). The span at 303 to 336 (SYGGSTSTPSSSSRLMLFSPPGQLPQSLSSPSTR) shows a compositional bias: low complexity. The segment covering 393-402 (TSPPPAPPCP) has biased composition (pro residues). Positions 403-784 (QDDCVHGSAA…QIRQLQHDRE (382 aa)) are mediates interaction with WDR45B. Positions 471–484 (EKDKEEAAISKELS) are enriched in basic and acidic residues. Residues serine 484, serine 502, serine 508, serine 518, serine 592, and serine 595 each carry the phosphoserine modification. Over residues 509–529 (LSGSQRKTHSAASGTQGSSVN) the composition is skewed to polar residues. Coiled coils occupy residues 721-849 (IRAA…NRQL), 879-917 (TAYRKELEKNRSHLLQQNQRLDASQRRVLELESLLAKKD), and 967-991 (EKDGRLRKLEEDRAEAAEAAEERLD). Disordered stretches follow at residues 1003–1077 (GHNE…SLPS) and 1092–1161 (NKSE…PEHS). Residues 1004-1017 (HNEEASGHNGETRT) show a composition bias toward basic and acidic residues. Residues 1026–1043 (SCGGRVTGGSSSSSSELS) show a composition bias toward low complexity. Positions 1064-1077 (PSSSIPTTVGSLPS) are enriched in polar residues. Serine 1094 bears the Phosphoserine mark. A compositionally biased stretch (low complexity) spans 1103–1113 (VTMSSSSLSET). 2 stretches are compositionally biased toward basic and acidic residues: residues 1114–1124 (LKTELGKDSGT) and 1152–1161 (DYNETHPEHS).

As to quaternary structure, component of the TSC-TBC complex (also named Rhebulator complex), composed of 2 molecules of TSC1, 2 molecules of TSC2 and 1 molecule of TBC1D7. Probably forms a complex composed of chaperones HSP90 and HSP70, co-chaperones STIP1/HOP, CDC37, PPP5C, PTGES3/p23, TSC1 and client protein TSC2. Forms a complex composed of chaperones HSP90 and HSP70, co-chaperones CDC37, PPP5C, TSC1 and client protein TSC2, CDK4, AKT, RAF1 and NR3C1; this complex does not contain co-chaperones STIP1/HOP and PTGES3/p23. Forms a complex containing HSP90AA1, TSC1 and TSC2; TSC1 is required to recruit TCS2 to the complex. Interacts (via C-terminus) with the closed form of HSP90AA1 (via the middle domain and TPR repeat-binding motif). Interacts with DOCK7. Interacts with FBXW5. Interacts with WDR45B. Interacts with RPAP3 and URI1. Phosphorylation at Ser-502 does not affect interaction with TSC2. In terms of processing, 'Lys-63'-linked ubiquitinated at Lys-30 by PELI1; the ubiquitination promotes TSC1/TSC2 complex stability.

It localises to the lysosome membrane. It is found in the cytoplasm. Its subcellular location is the cytosol. Non-catalytic component of the TSC-TBC complex, a multiprotein complex that acts as a negative regulator of the canonical mTORC1 complex, an evolutionarily conserved central nutrient sensor that stimulates anabolic reactions and macromolecule biosynthesis to promote cellular biomass generation and growth. The TSC-TBC complex acts as a GTPase-activating protein (GAP) for the small GTPase RHEB, a direct activator of the protein kinase activity of mTORC1. In absence of nutrients, the TSC-TBC complex inhibits mTORC1, thereby preventing phosphorylation of ribosomal protein S6 kinase (RPS6KB1 and RPS6KB2) and EIF4EBP1 (4E-BP1) by the mTORC1 signaling. The TSC-TBC complex is inactivated in response to nutrients, relieving inhibition of mTORC1. Within the TSC-TBC complex, TSC1 stabilizes TSC2 and prevents TSC2 self-aggregation. Involved in microtubule-mediated protein transport via its ability to regulate mTORC1 signaling. Also acts as a co-chaperone for HSP90AA1 facilitating HSP90AA1 chaperoning of protein clients such as kinases, TSC2 and glucocorticoid receptor NR3C1. Increases ATP binding to HSP90AA1 and inhibits HSP90AA1 ATPase activity. Competes with the activating co-chaperone AHSA1 for binding to HSP90AA1, thereby providing a reciprocal regulatory mechanism for chaperoning of client proteins. Recruits TSC2 to HSP90AA1 and stabilizes TSC2 by preventing the interaction between TSC2 and ubiquitin ligase HERC1. The polypeptide is Hamartin (Mus musculus (Mouse)).